The following is a 67-amino-acid chain: Conotoxin Cal14.2c (67 aa).

The first 20 residues, 1 to 20, serve as a signal peptide directing secretion; it reads MNVTVMFLVLLLLTMPLTDG. The propeptide occupies 21–48; it reads FNIRATNGGELFGPVQRDAGNVLDHGFQ.

It belongs to the conotoxin L superfamily. Post-translationally, contains 2 disulfide bonds. In terms of tissue distribution, expressed by the venom duct.

Its subcellular location is the secreted. In terms of biological role, probable neurotoxin with unknown target. Possibly targets ion channels. This Californiconus californicus (California cone) protein is Conotoxin Cal14.2c.